We begin with the raw amino-acid sequence, 398 residues long: Nicotinate phosphoribosyltransferase 2 (398 aa).

Phosphohistidine; by autocatalysis is present on His224.

Belongs to the NAPRTase family. Post-translationally, transiently phosphorylated on a His residue during the reaction cycle. Phosphorylation strongly increases the affinity for substrates and increases the rate of nicotinate D-ribonucleotide production. Dephosphorylation regenerates the low-affinity form of the enzyme, leading to product release.

The enzyme catalyses nicotinate + 5-phospho-alpha-D-ribose 1-diphosphate + ATP + H2O = nicotinate beta-D-ribonucleotide + ADP + phosphate + diphosphate. It functions in the pathway cofactor biosynthesis; NAD(+) biosynthesis; nicotinate D-ribonucleotide from nicotinate: step 1/1. Functionally, catalyzes the synthesis of beta-nicotinate D-ribonucleotide from nicotinate and 5-phospho-D-ribose 1-phosphate at the expense of ATP. The polypeptide is Nicotinate phosphoribosyltransferase 2 (Pseudomonas aeruginosa (strain ATCC 15692 / DSM 22644 / CIP 104116 / JCM 14847 / LMG 12228 / 1C / PRS 101 / PAO1)).